Reading from the N-terminus, the 587-residue chain is Protein POF1B (587 aa).

Residues 331–529 (STFSNIREEL…EELSKLRQEI (199 aa)) are a coiled coil.

Interacts with nonmuscle actin. As to expression, expression absent in adult ovary.

The protein localises to the cell junction. Its subcellular location is the tight junction. Plays a key role in the organization of epithelial monolayers by regulating the actin cytoskeleton. May be involved in ovary development. This is Protein POF1B (Pof1b) from Mus musculus (Mouse).